The chain runs to 74 residues: Lantibiotic lichenicidin A1 (74 aa).

Residues 1 to 42 (MSKKEMILSWKNPMYRTESSYHPAGNILKELQEEEQHSIAGG) constitute a propeptide that is removed on maturation. The residue at position 43 (T43) is a 2-oxobutanoic acid. Positions 45–49 (TLSTC) form a cross-link, beta-methyllanthionine (Thr-Cys). S47 carries the 2,3-didehydroalanine (Ser) modification. T48 bears the (Z)-2,3-didehydrobutyrine mark. Residues 53–63 (SKPLGNNGYLC) constitute a cross-link (lanthionine (Ser-Cys)). 2 cross-links (beta-methyllanthionine (Thr-Cys)) span residues 64–69 (TVTKEC) and 66–73 (TKECMPSC).

In terms of processing, maturation of lantibiotics involves the enzymatic conversion of Thr, and Ser into dehydrated AA and the formation of thioether bonds with cysteine. This is followed by membrane translocation and cleavage of the modified precursor.

It localises to the secreted. The protein localises to the cell wall. Functionally, lanthionine-containing peptide antibiotic (lantibiotic) active on Gram-positive bacteria. The bactericidal activity of lantibiotics is based on depolarization of energized bacterial cytoplasmic membranes, initiated by the formation of aqueous transmembrane pores. When present individually, LchA1 exhibits activity towards L.lactis HP. When combined with LchA2, it displays activity towards a broad spectrum of non-pathogenic and pathogenic Gram-positive bacteria including strains of L.monocytogenes, methicillin-resistant S.aureus, S.pneumoniae and strains of vancomycin-resistant enterococci, but not towards E.faecium L4001 and BM4147-1. Combined LchA1 and LchA2 peptides also inhibit Bacillus sp. HIL-Y85/54728, L.lactis DPC3417 and B.halodurans C-125, which produce lantibiotics themselves. Inactivated by proteinase K and pronase E, but not by trypsin and chymotrypsin. This is Lantibiotic lichenicidin A1 from Bacillus licheniformis (strain ATCC 14580 / DSM 13 / JCM 2505 / CCUG 7422 / NBRC 12200 / NCIMB 9375 / NCTC 10341 / NRRL NRS-1264 / Gibson 46).